The chain runs to 569 residues: Glycylpeptide N-tetradecanoyltransferase (569 aa).

Residues Met-1–Ala-18 are compositionally biased toward basic and acidic residues. The interval Met-1 to Leu-82 is disordered. Basic residues predominate over residues Thr-55–Lys-68. Residues Tyr-158–Trp-161, Leu-291–Ile-293, and Gly-299–Ala-303 each bind tetradecanoyl-CoA. Catalysis depends on Val-569, which acts as the Proton acceptor; via carboxylate.

It belongs to the NMT family. As to quaternary structure, monomer.

It is found in the cytoplasm. The catalysed reaction is N-terminal glycyl-[protein] + tetradecanoyl-CoA = N-tetradecanoylglycyl-[protein] + CoA + H(+). Its function is as follows. Adds a myristoyl group to the N-terminal glycine residue of certain cellular proteins. This chain is Glycylpeptide N-tetradecanoyltransferase (gtt-1), found in Neurospora crassa (strain ATCC 24698 / 74-OR23-1A / CBS 708.71 / DSM 1257 / FGSC 987).